A 245-amino-acid chain; its full sequence is 5'-nucleotidase SurE (245 aa).

Asp8, Asp9, Ser39, and Asn97 together coordinate a divalent metal cation.

The protein belongs to the SurE nucleotidase family. A divalent metal cation is required as a cofactor.

The protein resides in the cytoplasm. It catalyses the reaction a ribonucleoside 5'-phosphate + H2O = a ribonucleoside + phosphate. Nucleotidase that shows phosphatase activity on nucleoside 5'-monophosphates. The chain is 5'-nucleotidase SurE from Clostridium kluyveri (strain NBRC 12016).